The following is a 461-amino-acid chain: 26S proteasome regulatory subunit 8 (461 aa).

185-192 is a binding site for ATP; the sequence is GPPGTGKT.

Belongs to the AAA ATPase family.

The protein localises to the cytoplasm. It is found in the nucleus. Functionally, the 26S proteasome is involved in the ATP-dependent degradation of ubiquitinated proteins. The regulatory (or ATPase) complex confers ATP dependency and substrate specificity to the 26S complex. The sequence is that of 26S proteasome regulatory subunit 8 (psmc5) from Xenopus laevis (African clawed frog).